Reading from the N-terminus, the 295-residue chain is Protease HtpX (295 aa).

The next 2 membrane-spanning stretches (helical) occupy residues 4-24 (ILLF…TLSL) and 41-61 (SSLL…SLFI). Residue histidine 147 participates in Zn(2+) binding. Glutamate 148 is an active-site residue. Position 151 (histidine 151) interacts with Zn(2+). Transmembrane regions (helical) follow at residues 158 to 178 (VTLA…ARII) and 199 to 219 (VATI…VMWF). Glutamate 224 contributes to the Zn(2+) binding site.

It belongs to the peptidase M48B family. Zn(2+) serves as cofactor.

It is found in the cell inner membrane. The polypeptide is Protease HtpX (Pseudomonas putida (strain ATCC 700007 / DSM 6899 / JCM 31910 / BCRC 17059 / LMG 24140 / F1)).